The following is a 239-amino-acid chain: Biosynthetic peptidoglycan transglycosylase (239 aa).

A helical transmembrane segment spans residues 29-49; it reads GMFGLGALMLVWIVAYAVVPV.

Belongs to the glycosyltransferase 51 family.

It is found in the cell inner membrane. The catalysed reaction is [GlcNAc-(1-&gt;4)-Mur2Ac(oyl-L-Ala-gamma-D-Glu-L-Lys-D-Ala-D-Ala)](n)-di-trans,octa-cis-undecaprenyl diphosphate + beta-D-GlcNAc-(1-&gt;4)-Mur2Ac(oyl-L-Ala-gamma-D-Glu-L-Lys-D-Ala-D-Ala)-di-trans,octa-cis-undecaprenyl diphosphate = [GlcNAc-(1-&gt;4)-Mur2Ac(oyl-L-Ala-gamma-D-Glu-L-Lys-D-Ala-D-Ala)](n+1)-di-trans,octa-cis-undecaprenyl diphosphate + di-trans,octa-cis-undecaprenyl diphosphate + H(+). Its pathway is cell wall biogenesis; peptidoglycan biosynthesis. Functionally, peptidoglycan polymerase that catalyzes glycan chain elongation from lipid-linked precursors. The polypeptide is Biosynthetic peptidoglycan transglycosylase (Jannaschia sp. (strain CCS1)).